Here is a 327-residue protein sequence, read N- to C-terminus: L-lactate dehydrogenase (327 aa).

NAD(+)-binding positions include V18, D39, K44, Y69, and 83–84 (GA). Substrate is bound by residues Q86, R92, and 124–127 (NPVD). Residues 122 to 124 (AAN) and S147 each bind NAD(+). 152–155 (DSAR) serves as a coordination point for substrate. Positions 157 and 172 each coordinate beta-D-fructose 1,6-bisphosphate. Catalysis depends on H179, which acts as the Proton acceptor. At Y224 the chain carries Phosphotyrosine. T233 lines the substrate pocket.

Belongs to the LDH/MDH superfamily. LDH family. As to quaternary structure, homotetramer.

The protein resides in the cytoplasm. It catalyses the reaction (S)-lactate + NAD(+) = pyruvate + NADH + H(+). The protein operates within fermentation; pyruvate fermentation to lactate; (S)-lactate from pyruvate: step 1/1. With respect to regulation, allosterically activated by fructose 1,6-bisphosphate (FBP). In terms of biological role, catalyzes the conversion of lactate to pyruvate. The polypeptide is L-lactate dehydrogenase (Streptococcus uberis (strain ATCC BAA-854 / 0140J)).